The primary structure comprises 79 residues: Apolipoprotein C-II (79 aa).

The signal sequence occupies residues 1–21; that stretch reads MDLKVVAVSFLLLVLCSEAAG. Residues 45–52 are lipid binding; that stretch reads GVEKLRDI. The segment at 56–79 is lipoprotein lipase cofactor; that stretch reads SVDAVGTYTSILTDQLYHWWCGEQ.

This sequence belongs to the apolipoprotein C2 family. In terms of processing, proapolipoprotein C-II is synthesized as a sialic acid containing glycoprotein which is subsequently desialylated prior to its proteolytic processing. Proapolipoprotein C-II, the major form found in plasma undergoes proteolytic cleavage of its N-terminal hexapeptide to generate apolipoprotein C-II, which occurs as the minor form in plasma.

Its subcellular location is the secreted. Component of chylomicrons, very low-density lipoproteins (VLDL), low-density lipoproteins (LDL), and high-density lipoproteins (HDL) in plasma. Plays an important role in lipoprotein metabolism as an activator of lipoprotein lipase. Both proapolipoprotein C-II and apolipoprotein C-II can activate lipoprotein lipase. This chain is Apolipoprotein C-II (APOC2), found in Alligator mississippiensis (American alligator).